The sequence spans 445 residues: Glucose-6-phosphate isomerase 2 (445 aa).

Glu-285 serves as the catalytic Proton donor. Residues His-306 and Lys-420 contribute to the active site.

The protein belongs to the GPI family. In terms of assembly, homodimer.

Its subcellular location is the cytoplasm. It carries out the reaction alpha-D-glucose 6-phosphate = beta-D-fructose 6-phosphate. It participates in carbohydrate biosynthesis; gluconeogenesis. The protein operates within carbohydrate degradation; glycolysis; D-glyceraldehyde 3-phosphate and glycerone phosphate from D-glucose: step 2/4. Its function is as follows. Catalyzes the reversible isomerization of glucose-6-phosphate to fructose-6-phosphate. The polypeptide is Glucose-6-phosphate isomerase 2 (Geobacillus stearothermophilus (Bacillus stearothermophilus)).